Consider the following 1803-residue polypeptide: Pyruvate dehydrogenase [NADP(+)], mitochondrial (1803 aa).

The N-terminal 37 residues, 1–37 (MKQSVRPIISNVLRKEVALYSTIIGQDKGKEPTGRTY), are a transit peptide targeting the mitochondrion. 4Fe-4S ferredoxin-type domains lie at 747–776 (FIPQ…PFVL) and 802–831 (FRIQ…MTDA). 8 residues coordinate [4Fe-4S] cluster: cysteine 756, cysteine 759, cysteine 762, cysteine 766, cysteine 811, cysteine 814, cysteine 817, and cysteine 821. The Flavodoxin-like domain maps to 1248–1391 (VTILYGSETG…GFNNWIPSVW (144 aa)). In terms of domain architecture, FAD-binding FR-type spans 1425 to 1650 (KSTPVLSITG…IHPTAMEFPD (226 aa)). FAD-binding positions include 1458-1469 (YQVGDSLGVFPE) and 1585-1595 (IKPRYYSISSA).

The protein in the N-terminal section; belongs to the pyruvate:ferredoxin/flavodoxin oxidoreductase family. In terms of assembly, homodimer. It depends on FAD as a cofactor. FMN serves as cofactor. Thiamine diphosphate is required as a cofactor. Requires iron-sulfur cluster as cofactor.

The protein localises to the mitochondrion. The enzyme catalyses pyruvate + NADP(+) + CoA = acetyl-CoA + CO2 + NADPH. Its function is as follows. Pyruvate dehydrogenase [NADP(+)] is one of three enzymes participating in respiratory metabolism. The enzyme is also active with 2-oxobutyrate and oxaloacetate. The enzyme is oxygen sensitive. The polypeptide is Pyruvate dehydrogenase [NADP(+)], mitochondrial (PNO) (Euglena gracilis).